A 195-amino-acid polypeptide reads, in one-letter code: Imidazoleglycerol-phosphate dehydratase (195 aa).

Belongs to the imidazoleglycerol-phosphate dehydratase family.

It is found in the cytoplasm. The enzyme catalyses D-erythro-1-(imidazol-4-yl)glycerol 3-phosphate = 3-(imidazol-4-yl)-2-oxopropyl phosphate + H2O. Its pathway is amino-acid biosynthesis; L-histidine biosynthesis; L-histidine from 5-phospho-alpha-D-ribose 1-diphosphate: step 6/9. The chain is Imidazoleglycerol-phosphate dehydratase from Frankia casuarinae (strain DSM 45818 / CECT 9043 / HFP020203 / CcI3).